Here is a 146-residue protein sequence, read N- to C-terminus: UPF0306 protein HD_1359 (146 aa).

Belongs to the UPF0306 family.

In Haemophilus ducreyi (strain 35000HP / ATCC 700724), this protein is UPF0306 protein HD_1359.